Reading from the N-terminus, the 384-residue chain is Dual-specificity RNA methyltransferase RlmN (384 aa).

The active-site Proton acceptor is the glutamate 93. The Radical SAM core domain maps to 99–339 (EETRGTLCVS…TTIRKTRGDD (241 aa)). The cysteines at positions 106 and 344 are disulfide-linked. [4Fe-4S] cluster is bound by residues cysteine 113, cysteine 117, and cysteine 120. Residues 170 to 171 (GE), serine 202, 224 to 226 (SLH), and asparagine 301 contribute to the S-adenosyl-L-methionine site. The active-site S-methylcysteine intermediate is cysteine 344.

The protein belongs to the radical SAM superfamily. RlmN family. Requires [4Fe-4S] cluster as cofactor.

The protein localises to the cytoplasm. It catalyses the reaction adenosine(2503) in 23S rRNA + 2 reduced [2Fe-2S]-[ferredoxin] + 2 S-adenosyl-L-methionine = 2-methyladenosine(2503) in 23S rRNA + 5'-deoxyadenosine + L-methionine + 2 oxidized [2Fe-2S]-[ferredoxin] + S-adenosyl-L-homocysteine. The enzyme catalyses adenosine(37) in tRNA + 2 reduced [2Fe-2S]-[ferredoxin] + 2 S-adenosyl-L-methionine = 2-methyladenosine(37) in tRNA + 5'-deoxyadenosine + L-methionine + 2 oxidized [2Fe-2S]-[ferredoxin] + S-adenosyl-L-homocysteine. Its function is as follows. Specifically methylates position 2 of adenine 2503 in 23S rRNA and position 2 of adenine 37 in tRNAs. m2A2503 modification seems to play a crucial role in the proofreading step occurring at the peptidyl transferase center and thus would serve to optimize ribosomal fidelity. In Cupriavidus necator (strain ATCC 17699 / DSM 428 / KCTC 22496 / NCIMB 10442 / H16 / Stanier 337) (Ralstonia eutropha), this protein is Dual-specificity RNA methyltransferase RlmN.